The chain runs to 364 residues: Probable dual-specificity RNA methyltransferase RlmN (364 aa).

The active-site Proton acceptor is the glutamate 107. Positions 113–346 constitute a Radical SAM core domain; it reads HEYGNSVCVT…ATIRREQGSD (234 aa). Cysteines 120 and 351 form a disulfide. 3 residues coordinate [4Fe-4S] cluster: cysteine 127, cysteine 131, and cysteine 134. S-adenosyl-L-methionine contacts are provided by residues 177–178, serine 209, 232–234, and asparagine 308; these read GE and SLH. The active-site S-methylcysteine intermediate is cysteine 351.

Belongs to the radical SAM superfamily. RlmN family. The cofactor is [4Fe-4S] cluster.

Its subcellular location is the cytoplasm. The enzyme catalyses adenosine(2503) in 23S rRNA + 2 reduced [2Fe-2S]-[ferredoxin] + 2 S-adenosyl-L-methionine = 2-methyladenosine(2503) in 23S rRNA + 5'-deoxyadenosine + L-methionine + 2 oxidized [2Fe-2S]-[ferredoxin] + S-adenosyl-L-homocysteine. The catalysed reaction is adenosine(37) in tRNA + 2 reduced [2Fe-2S]-[ferredoxin] + 2 S-adenosyl-L-methionine = 2-methyladenosine(37) in tRNA + 5'-deoxyadenosine + L-methionine + 2 oxidized [2Fe-2S]-[ferredoxin] + S-adenosyl-L-homocysteine. Functionally, specifically methylates position 2 of adenine 2503 in 23S rRNA and position 2 of adenine 37 in tRNAs. Confers resistance to some classes of antibiotics. This is Probable dual-specificity RNA methyltransferase RlmN from Staphylococcus carnosus (strain TM300).